Consider the following 473-residue polypeptide: Trigger factor (473 aa).

The PPIase FKBP-type domain occupies 162-243 (GDFVSIDLSA…VKSIKVRELP (82 aa)). The tract at residues 433–473 (TAEFFGPSGEQAEAEQDEAAPAEDATEETDADSDEAADDSK) is disordered. Positions 444 to 473 (AEAEQDEAAPAEDATEETDADSDEAADDSK) are enriched in acidic residues.

The protein belongs to the FKBP-type PPIase family. Tig subfamily.

It is found in the cytoplasm. It carries out the reaction [protein]-peptidylproline (omega=180) = [protein]-peptidylproline (omega=0). Functionally, involved in protein export. Acts as a chaperone by maintaining the newly synthesized protein in an open conformation. Functions as a peptidyl-prolyl cis-trans isomerase. In Mycolicibacterium vanbaalenii (strain DSM 7251 / JCM 13017 / BCRC 16820 / KCTC 9966 / NRRL B-24157 / PYR-1) (Mycobacterium vanbaalenii), this protein is Trigger factor.